Consider the following 363-residue polypeptide: Peptide chain release factor 1 (363 aa).

Glutamine 237 is subject to N5-methylglutamine. The segment covering 286-296 (EKRRSAEESTR) has biased composition (basic and acidic residues). Residues 286–305 (EKRRSAEESTRRSLVASGDR) are disordered.

Belongs to the prokaryotic/mitochondrial release factor family. Post-translationally, methylated by PrmC. Methylation increases the termination efficiency of RF1.

The protein resides in the cytoplasm. Functionally, peptide chain release factor 1 directs the termination of translation in response to the peptide chain termination codons UAG and UAA. The protein is Peptide chain release factor 1 of Shewanella baltica (strain OS155 / ATCC BAA-1091).